A 533-amino-acid polypeptide reads, in one-letter code: Phosphoenolpyruvate carboxykinase (ATP) (533 aa).

Substrate-binding residues include Arg59, Tyr199, and Lys205. ATP is bound by residues Lys205, His224, and 240–248; that span reads GLSGTGKTT. 2 residues coordinate Mn(2+): Lys205 and His224. Asp261 serves as a coordination point for Mn(2+). ATP contacts are provided by residues Glu289, Arg325, 441 to 442, and Thr447; that span reads RI. A substrate-binding site is contributed by Arg325.

The protein belongs to the phosphoenolpyruvate carboxykinase (ATP) family. In terms of assembly, monomer. Requires Mn(2+) as cofactor.

Its subcellular location is the cytoplasm. It carries out the reaction oxaloacetate + ATP = phosphoenolpyruvate + ADP + CO2. It functions in the pathway carbohydrate biosynthesis; gluconeogenesis. Functionally, involved in the gluconeogenesis. Catalyzes the conversion of oxaloacetate (OAA) to phosphoenolpyruvate (PEP) through direct phosphoryl transfer between the nucleoside triphosphate and OAA. This chain is Phosphoenolpyruvate carboxykinase (ATP), found in Idiomarina loihiensis (strain ATCC BAA-735 / DSM 15497 / L2-TR).